The sequence spans 478 residues: Transposase for insertion sequence element IS231B (478 aa).

This sequence belongs to the transposase 11 family.

In terms of biological role, involved in the transposition of the insertion sequence. The protein is Transposase for insertion sequence element IS231B of Bacillus thuringiensis subsp. berliner.